The primary structure comprises 209 residues: MAFDQDWVPKTRLGKLVVEGQVASMDEAIKSGLPIREPQIIDMLLPDLEDEVLDINMVQRMTDSGRRVKFRATVIVGNRNGYVGLGQAKDVQVGPAIRKAIDAAKLNITYIRRGCGSWECACGLPHTVPYEVTGKAGSVSVTLIPAPRGLGIAAGNTATKVLEKAGIKDVWTKTFGTTRSTLNFAKATYDALNQVNVVRLPVYYGKEEI.

Residues 48 to 111 enclose the S5 DRBM domain; the sequence is LEDEVLDINM…DAAKLNITYI (64 aa).

This sequence belongs to the universal ribosomal protein uS5 family. In terms of assembly, part of the 30S ribosomal subunit. Contacts protein S4.

In terms of biological role, with S4 and S12 plays an important role in translational accuracy. The polypeptide is Small ribosomal subunit protein uS5 (Methanosarcina mazei (strain ATCC BAA-159 / DSM 3647 / Goe1 / Go1 / JCM 11833 / OCM 88) (Methanosarcina frisia)).